Reading from the N-terminus, the 307-residue chain is Aspartate carbamoyltransferase catalytic subunit (307 aa).

Residues R58 and T59 each contribute to the carbamoyl phosphate site. L-aspartate is bound at residue K86. Residues R108, H136, and Q139 each contribute to the carbamoyl phosphate site. The L-aspartate site is built by R169 and R223. Carbamoyl phosphate is bound by residues G264 and P265.

The protein belongs to the aspartate/ornithine carbamoyltransferase superfamily. ATCase family. As to quaternary structure, heterododecamer (2C3:3R2) of six catalytic PyrB chains organized as two trimers (C3), and six regulatory PyrI chains organized as three dimers (R2).

The catalysed reaction is carbamoyl phosphate + L-aspartate = N-carbamoyl-L-aspartate + phosphate + H(+). It functions in the pathway pyrimidine metabolism; UMP biosynthesis via de novo pathway; (S)-dihydroorotate from bicarbonate: step 2/3. In terms of biological role, catalyzes the condensation of carbamoyl phosphate and aspartate to form carbamoyl aspartate and inorganic phosphate, the committed step in the de novo pyrimidine nucleotide biosynthesis pathway. In Moorella thermoacetica (strain ATCC 39073 / JCM 9320), this protein is Aspartate carbamoyltransferase catalytic subunit.